The sequence spans 251 residues: Triosephosphate isomerase (251 aa).

Residue 9–11 coordinates substrate; that stretch reads NWK. The active-site Electrophile is the histidine 94. Residue glutamate 166 is the Proton acceptor of the active site. Substrate is bound by residues glycine 172, serine 211, and 232–233; that span reads GG.

Belongs to the triosephosphate isomerase family. In terms of assembly, homodimer.

It localises to the cytoplasm. It catalyses the reaction D-glyceraldehyde 3-phosphate = dihydroxyacetone phosphate. It participates in carbohydrate biosynthesis; gluconeogenesis. Its pathway is carbohydrate degradation; glycolysis; D-glyceraldehyde 3-phosphate from glycerone phosphate: step 1/1. Functionally, involved in the gluconeogenesis. Catalyzes stereospecifically the conversion of dihydroxyacetone phosphate (DHAP) to D-glyceraldehyde-3-phosphate (G3P). The protein is Triosephosphate isomerase of Stenotrophomonas maltophilia (strain R551-3).